Reading from the N-terminus, the 269-residue chain is WW domain-binding protein 1 (269 aa).

2 consecutive short sequence motifs (PPxY motif) follow at residues 124–127 and 137–141; these read PPAY and PPPPY. Disordered regions lie at residues 169 to 203 and 249 to 269; these read EGTNVEGVSSHQSAPPHQEGEPGAGVTPASTPPSC and PPESVPQIFPMGLSSSEGDIP. A compositionally biased stretch (polar residues) spans 174 to 183; sequence EGVSSHQSAP.

Interacts with NEDD4. Binds to the WW domain of YAP1, WWP1 and WWP2. Interacts with WWOX. As to expression, expressed in most tissues but at significantly lower levels in placenta, lung, liver, and kidney.

In Homo sapiens (Human), this protein is WW domain-binding protein 1 (WBP1).